Consider the following 263-residue polypeptide: MGSEISKKDITRLGFRSSLLQASFNYERMQAGGFTWAMLPILKKIYKDDKPGLSAAMKDNLEFINTHPNLVGFLMGLLISMEEKGENRDTIKGLKVALFGPIAGIGDAIFWFTLLPIMAGICSSFASQGNLLGPILFFAVYLLIFFLRVGWTHVGYSVGVKAIDKVRENSQMIARSATILGITVIGGLIASYVHINVVTSFAIDNTHSVALQQDFFDKVFPNILPMAYTLLMYYFLRVKKAHPVLLIGVTFVLSIVCSAFGIL.

The PTS EIID domain occupies 3–263 (SEISKKDITR…SIVCSAFGIL (261 aa)). Helical transmembrane passes span 61–81 (LEFINTHPNLVGFLMGLLISM), 98–118 (LFGPIAGIGDAIFWFTLLPIM), 131–151 (LLGPILFFAVYLLIFFLRVGW), 178–198 (TILGITVIGGLIASYVHINVV), 215–235 (FFDKVFPNILPMAYTLLMYYF), and 243–263 (PVLLIGVTFVLSIVCSAFGIL).

The protein localises to the cell inner membrane. In terms of biological role, the phosphoenolpyruvate-dependent sugar phosphotransferase system (PTS), a major carbohydrate active -transport system, catalyzes the phosphorylation of incoming sugar substrates concomitant with their translocation across the cell membrane. This system is involved in N-acetylgalactosamine transport. The polypeptide is N-acetylgalactosamine permease IID component (agaD) (Escherichia coli (strain K12)).